The chain runs to 353 residues: Uroporphyrinogen decarboxylase (353 aa).

Substrate is bound by residues Arg-28–Arg-32, Asp-78, Tyr-155, Ser-210, and His-325.

This sequence belongs to the uroporphyrinogen decarboxylase family. In terms of assembly, homodimer.

It is found in the cytoplasm. The enzyme catalyses uroporphyrinogen III + 4 H(+) = coproporphyrinogen III + 4 CO2. It functions in the pathway porphyrin-containing compound metabolism; protoporphyrin-IX biosynthesis; coproporphyrinogen-III from 5-aminolevulinate: step 4/4. Functionally, catalyzes the decarboxylation of four acetate groups of uroporphyrinogen-III to yield coproporphyrinogen-III. The sequence is that of Uroporphyrinogen decarboxylase from Nostoc punctiforme (strain ATCC 29133 / PCC 73102).